The sequence spans 530 residues: Cytochrome P450 monooxygenase sttB (530 aa).

Asn-5 carries an N-linked (GlcNAc...) asparagine glycan. Residues 24–44 (LPILTVALLTGIASAVYINVS) form a helical membrane-spanning segment. N-linked (GlcNAc...) asparagine glycosylation occurs at Asn-230.

Belongs to the cytochrome P450 family. It depends on heme as a cofactor.

The protein localises to the membrane. It catalyses the reaction preaspterpenacid acid I + reduced [NADPH--hemoprotein reductase] + O2 = preaspterpenacid acid II + oxidized [NADPH--hemoprotein reductase] + H2O + H(+). The protein operates within secondary metabolite biosynthesis; terpenoid biosynthesis. In terms of biological role, cytochrome P450 monooxygenase; part of the gene cluster that mediates the biosynthesis of aspterpenacids. Performs the C22-oxidative modification of the terpene synthase sttA product preaspterpenacid I to produce preaspterpenacid II. It has still to be determined how preaspterpenacid II is further modified to produce aspterpenacids. In Aspergillus terreus (strain NIH 2624 / FGSC A1156), this protein is Cytochrome P450 monooxygenase sttB.